The sequence spans 507 residues: Maturase K (507 aa).

This sequence belongs to the intron maturase 2 family. MatK subfamily.

It localises to the plastid. The protein localises to the chloroplast. Functionally, usually encoded in the trnK tRNA gene intron. Probably assists in splicing its own and other chloroplast group II introns. The protein is Maturase K of Annona muricata (Soursop).